A 329-amino-acid chain; its full sequence is Phosphate acyltransferase (329 aa).

This sequence belongs to the PlsX family. In terms of assembly, homodimer. Probably interacts with PlsY.

It localises to the cytoplasm. The enzyme catalyses a fatty acyl-[ACP] + phosphate = an acyl phosphate + holo-[ACP]. The protein operates within lipid metabolism; phospholipid metabolism. Functionally, catalyzes the reversible formation of acyl-phosphate (acyl-PO(4)) from acyl-[acyl-carrier-protein] (acyl-ACP). This enzyme utilizes acyl-ACP as fatty acyl donor, but not acyl-CoA. This chain is Phosphate acyltransferase, found in Shouchella clausii (strain KSM-K16) (Alkalihalobacillus clausii).